A 101-amino-acid chain; its full sequence is Urease subunit gamma (101 aa).

Belongs to the urease gamma subunit family. Heterotrimer of UreA (gamma), UreB (beta) and UreC (alpha) subunits. Three heterotrimers associate to form the active enzyme.

Its subcellular location is the cytoplasm. The enzyme catalyses urea + 2 H2O + H(+) = hydrogencarbonate + 2 NH4(+). Its pathway is nitrogen metabolism; urea degradation; CO(2) and NH(3) from urea (urease route): step 1/1. The polypeptide is Urease subunit gamma (Geobacillus kaustophilus (strain HTA426)).